The sequence spans 136 residues: Holo-[acyl-carrier-protein] synthase (136 aa).

Mg(2+)-binding residues include Asp-8 and Glu-57.

Belongs to the P-Pant transferase superfamily. AcpS family. It depends on Mg(2+) as a cofactor.

It localises to the cytoplasm. It carries out the reaction apo-[ACP] + CoA = holo-[ACP] + adenosine 3',5'-bisphosphate + H(+). In terms of biological role, transfers the 4'-phosphopantetheine moiety from coenzyme A to a Ser of acyl-carrier-protein. The protein is Holo-[acyl-carrier-protein] synthase of Methylorubrum populi (strain ATCC BAA-705 / NCIMB 13946 / BJ001) (Methylobacterium populi).